The primary structure comprises 411 residues: LL-diaminopimelate aminotransferase (411 aa).

The substrate site is built by Tyr15 and Gly42. Residues Tyr72, 108 to 109 (AK), Tyr132, Asn187, Tyr218, and 246 to 248 (SFS) each bind pyridoxal 5'-phosphate. 3 residues coordinate substrate: Lys109, Tyr132, and Asn187. Position 249 is an N6-(pyridoxal phosphate)lysine (Lys249). Residues Arg257 and Asn292 each contribute to the pyridoxal 5'-phosphate site. Residues Asn292 and Arg388 each contribute to the substrate site.

It belongs to the class-I pyridoxal-phosphate-dependent aminotransferase family. LL-diaminopimelate aminotransferase subfamily. As to quaternary structure, homodimer. The cofactor is pyridoxal 5'-phosphate.

The enzyme catalyses (2S,6S)-2,6-diaminopimelate + 2-oxoglutarate = (S)-2,3,4,5-tetrahydrodipicolinate + L-glutamate + H2O + H(+). It participates in amino-acid biosynthesis; L-lysine biosynthesis via DAP pathway; LL-2,6-diaminopimelate from (S)-tetrahydrodipicolinate (aminotransferase route): step 1/1. Functionally, involved in the synthesis of meso-diaminopimelate (m-DAP or DL-DAP), required for both lysine and peptidoglycan biosynthesis. Catalyzes the direct conversion of tetrahydrodipicolinate to LL-diaminopimelate. This is LL-diaminopimelate aminotransferase from Crocosphaera subtropica (strain ATCC 51142 / BH68) (Cyanothece sp. (strain ATCC 51142)).